The primary structure comprises 285 residues: Transcription factor MYB15 (285 aa).

HTH myb-type domains are found at residues 9–61 (KMGL…MNYL) and 62–116 (KPDI…KKRL). DNA-binding regions (H-T-H motif) lie at residues 37–61 (WRAL…MNYL) and 89–112 (WSAI…HTHL). Residues 115–172 (RLEDYQPAKPKTSNKKKGTKPKSESVITSSNSTRSESELADSSNPSGESLFSTSPSTS) are disordered. Residues 139 to 158 (SVITSSNSTRSESELADSSN) are compositionally biased toward polar residues. Positions 159–172 (PSGESLFSTSPSTS) are enriched in low complexity.

Interacts with SCRM/ICE1. As to expression, expressed in roots, leaves, stems and flowers. Expressed in stomatal guard cells.

Its subcellular location is the nucleus. Functionally, transcription factor involved in cold-regulation of CBF genes and in the development of freezing tolerance. May be part of a complex network of transcription factors controlling the expression of CBF genes and other genes in response to cold stress. Binds to the MYB recognition sequences in the promoters of CBF1, CBF2 and CBF3 genes. Involved in drought and salt tolerance. May enhance expression levels of genes involved in abscisic acid (ABA) biosynthesis and signaling, as well as those encoding stress-protective proteins. The protein is Transcription factor MYB15 of Arabidopsis thaliana (Mouse-ear cress).